The chain runs to 201 residues: Large ribosomal subunit protein uL4 (201 aa).

The segment at 43 to 73 (TRAQKTRSEVSGGGAKPWRQKGTGRARAGTT) is disordered.

It belongs to the universal ribosomal protein uL4 family. Part of the 50S ribosomal subunit.

In terms of biological role, one of the primary rRNA binding proteins, this protein initially binds near the 5'-end of the 23S rRNA. It is important during the early stages of 50S assembly. It makes multiple contacts with different domains of the 23S rRNA in the assembled 50S subunit and ribosome. Its function is as follows. Forms part of the polypeptide exit tunnel. The sequence is that of Large ribosomal subunit protein uL4 from Colwellia psychrerythraea (strain 34H / ATCC BAA-681) (Vibrio psychroerythus).